The primary structure comprises 122 residues: MKEEKRSSTGFLVKQRAFLKLYMITMTEQERLYGLKLLEVLRSEFKEIGFKPNHTEVYRSLHELLDDGILKQIKVKKEGAKLQEVVLYQFKDYEAAKLYKKQLKVELDRCKKLIEKALSDNF.

In terms of assembly, homodimer.

Its function is as follows. Plays a role in DNA replication and termination (fork arrest mechanism). Two dimers of rtp bind to the two inverted repeat regions (IRI and IRII) present in the termination site. The binding of each dimer is centered on an 8 bp direct repeat. In Bacillus spizizenii (strain ATCC 23059 / NRRL B-14472 / W23) (Bacillus subtilis subsp. spizizenii), this protein is Replication termination protein (rtp).